The following is a 400-amino-acid chain: Integumentary mucin A.1 (400 aa).

The first 20 residues, 1-20, serve as a signal peptide directing secretion; sequence MKHIILCIHFLLMVVGLGQA. P-type domains lie at 21-64 and 72-115; these read QDCS…FYNA and LECS…YART. Cystine bridges form between Cys23/Cys49, Cys33/Cys48, and Cys43/Cys60. A glycan (N-linked (GlcNAc...) asparagine) is linked at Asn63. 3 cysteine pairs are disulfide-bonded: Cys74–Cys100, Cys84–Cys99, and Cys94–Cys111. Composition is skewed to low complexity over residues 122-264 and 272-299; these read PDTT…DTTP and ETTT…ETTT. The interval 122–302 is disordered; it reads PDTTTASTTA…TTTETTTAPP (181 aa). Repeat copies occupy residues 127 to 135, 136 to 144, 145 to 153, 154 to 162, 163 to 171, 172 to 180, 181 to 189, 190 to 198, 199 to 207, 208 to 216, 217 to 225, 226 to 234, 235 to 243, and 244 to 252. Residues 127 to 261 are 15 X 9 AA approximate tandem repeats of [AV]-[SP]-T-T-[AP]-E-T-T-T; sequence ASTTAETTTV…TEPTTTPTTD (135 aa). A 1-15; approximate repeat occupies 253-261; sequence EPTTTPTTD. 7 consecutive repeat copies span residues 272–275, 276–279, 280–283, 284–287, 288–291, 292–295, and 296–299. Residues 272 to 299 are 7 X 4 AA repeats of E-T-T-T; the sequence is ETTTETTTETTTETTTETTTETTTETTT. P-type domains are found at residues 298 to 343 and 351 to 394; these read TTAP…FYTE and AECT…FEKA. Cystine bridges form between Cys312-Cys327, Cys322-Cys339, Cys353-Cys379, Cys363-Cys378, and Cys373-Cys390.

Extensively O-glycosylated. Consist of about 70% carbohydrate and 30% protein. As to expression, expressed and stored exclusively in mature mucous glands of the skin.

It is found in the secreted. Its function is as follows. Could be involved in defense against microbial infections. Protects the epithelia from external environment. This chain is Integumentary mucin A.1, found in Xenopus laevis (African clawed frog).